A 192-amino-acid chain; its full sequence is Interleukin-18 (192 aa).

The propeptide occupies 1 to 35 (MAAMSEDSCVNFKEMMFIDNTLYFIPEENGDLESD).

This sequence belongs to the IL-1 family. As to quaternary structure, forms a ternary complex with ligand-binding receptor subunit IL18R1 and signaling receptor subunit IL18RAP at the plasma membrane. Mature IL18 first binds to IL18R1 forming a low affinity binary complex, which then interacts with IL18RAP to form a high affinity ternary complex that signals inside the cell. Interacts with cargo receptor TMED10; the interaction mediates the translocation from the cytoplasm into the ERGIC (endoplasmic reticulum-Golgi intermediate compartment) and thereby secretion. The pro-IL-18 precursor is processed by CASP1 to yield its mature, active form. The pro-IL-18 precursor is however not processed by Casp4/Casp11 in rodents. The pro-IL-18 precursor features autoinhibitory interactions between the propeptide and the post-cleavage-site region, preventing recognition by the IL18R1 receptor. Processing by CASP1 induces conformational changes to generate critical receptor-binding sites. The mature form is then secreted and released in the extracellular milieu by passing through the gasdermin-D (GSDMD) pore. In contrast, cleavage by CASP3 inactivates IL18.

It is found in the cytoplasm. The protein resides in the secreted. Functionally, pro-inflammatory cytokine primarily involved in epithelial barrier repair, polarized T-helper 1 (Th1) cell and natural killer (NK) cell immune responses. Upon binding to IL18R1 and IL18RAP, forms a signaling ternary complex which activates NF-kappa-B, triggering synthesis of inflammatory mediators. Synergizes with IL12/interleukin-12 to induce IFNG synthesis from T-helper 1 (Th1) cells and natural killer (NK) cells. Involved in transduction of inflammation downstream of pyroptosis: its mature form is specifically released in the extracellular milieu by passing through the gasdermin-D (GSDMD) pore. The chain is Interleukin-18 from Mus musculus (Mouse).